Reading from the N-terminus, the 147-residue chain is Hemoglobin subunit beta (147 aa).

At V2 the chain carries N-acetylvaline. The Globin domain maps to 3-147 (HLSAEEKGLV…VATALAHKYH (145 aa)). Phosphothreonine is present on T13. Phosphoserine is present on S45. At K60 the chain carries N6-acetyllysine. H64 contacts heme b. K83 is modified (N6-acetyllysine). H93 is a binding site for heme b. The residue at position 94 (C94) is an S-nitrosocysteine. The residue at position 145 (K145) is an N6-acetyllysine.

This sequence belongs to the globin family. In terms of assembly, heterotetramer of two alpha chains and two beta chains. As to expression, red blood cells.

Involved in oxygen transport from the lung to the various peripheral tissues. This chain is Hemoglobin subunit beta (HBB), found in Scapanus orarius (Coast mole).